Consider the following 490-residue polypeptide: Protein lag-3 (490 aa).

Disordered stretches follow at residues 18–55 (PSVA…EDEP), 105–155 (EDEE…PTSE), 213–235 (SSAD…SPAE), 307–362 (SSSE…MQRI), and 391–490 (QQQQ…ANIN). The span at 105–119 (EDEERKRVEQQKNKE) shows a compositional bias: basic and acidic residues. Residues 122 to 138 (NASTSAPTSSRNGGQSV) are compositionally biased toward polar residues. A compositionally biased stretch (polar residues) spans 307–318 (SSSESPTKQSPM). Low complexity-rich tracts occupy residues 341–359 (QLQQ…QQEM), 391–404 (QQQQ…HHQM), and 413–456 (QAHQ…HHQM).

As to quaternary structure, component of a complex consisting of at least a lin-12/Notch intracellular domain (NICD), lag-1, and lag-3. Interacts with a NICD of lin-12/Notch or glp-1/Notch; the interactions are direct. As to expression, expressed in the progenitor zone and the early pachytene region of the hermaphrodite gonad.

It is found in the nucleus. Functionally, glp-1/Notch and lin-12/Notch proteins promote signaling by recruiting lag-3 to target promoters, where it functions as a transcriptional activator, probably as part of a complex with a Notch intracellular domain (NICD) and the transcription regulator lag-1. Involved in the p53-mediated germ-cell apoptotic response to DNA damage, perhaps acting as a transcriptional activator. May regulate phosphatase lip-1 mRNA transcription downstream of glp-1. The chain is Protein lag-3 (sel-8) from Caenorhabditis elegans.